The primary structure comprises 201 residues: Probable nicotinate-nucleotide adenylyltransferase (201 aa).

The protein belongs to the NadD family.

It carries out the reaction nicotinate beta-D-ribonucleotide + ATP + H(+) = deamido-NAD(+) + diphosphate. Its pathway is cofactor biosynthesis; NAD(+) biosynthesis; deamido-NAD(+) from nicotinate D-ribonucleotide: step 1/1. Catalyzes the reversible adenylation of nicotinate mononucleotide (NaMN) to nicotinic acid adenine dinucleotide (NaAD). The protein is Probable nicotinate-nucleotide adenylyltransferase of Carboxydothermus hydrogenoformans (strain ATCC BAA-161 / DSM 6008 / Z-2901).